A 428-amino-acid chain; its full sequence is Aerobic C4-dicarboxylate transport protein (428 aa).

9 helical membrane passes run 5–27 (LFKSLYFQVLTAIAIGILLGHYY), 47–64 (MIIAPVIFCTVVTGIAGM), 77–99 (ALLYFEIVSTIALIIGLIIVNVV), 141–163 (VIGAFASGNILQVLLFAVLFGFA), 184–206 (VIFGIINMIMRLAPIGAFGAMAF), 216–238 (LVQLGQLIICFYITCILFVVVVL), 289–311 (VVGLVIPTGYSFNLDGTSIYLTM), 326–348 (IFHQITLLVVLLLSSKGAAGVTG), and 353–375 (VLAATISAVGHLPVAGLALILGI).

Belongs to the dicarboxylate/amino acid:cation symporter (DAACS) (TC 2.A.23) family.

Its subcellular location is the cell inner membrane. Functionally, responsible for the transport of dicarboxylates such as succinate, fumarate, and malate from the periplasm across the inner membrane. The sequence is that of Aerobic C4-dicarboxylate transport protein (dctA) from Salmonella typhimurium (strain LT2 / SGSC1412 / ATCC 700720).